A 210-amino-acid chain; its full sequence is Thioredoxin-like 3-1, chloroplastic (210 aa).

Residues 81–210 form the Thioredoxin domain; that stretch reads WRLKAFWSNI…EVRELINKFV (130 aa). Residues Cys130 and Cys133 each act as nucleophile in the active site. A disulfide bond links Cys130 and Cys133.

Belongs to the thioredoxin family.

Its subcellular location is the plastid. The protein resides in the chloroplast stroma. In terms of biological role, probable thiol-disulfide oxidoreductase that may participate in various redox reactions. This is Thioredoxin-like 3-1, chloroplastic (WCRKC1) from Arabidopsis thaliana (Mouse-ear cress).